Reading from the N-terminus, the 545-residue chain is MLLKNCETDKQRDIRYACLFKELDVKGNGQVTLDNLISAFEKNDHPLKGNDEAIKMLFTAMDVNKDSVVDLSDFKKYASNAESQIWNGFQRIDLDHDGKIGINEINRYLSDLDNQSICNNELNHELSNEKMNKFSRFFEWAFPKRKANIALRGQASHKKNTDNDRSKKTTDSDLYVTYDQWRDFLLLVPRKQGSRLHTAYSYFYLFNEDVDLSSEGDVTLINDFIRGFGFFIAGGISGVISRTCTAPFDRLKVFLIARTDLSSILLNSKTDLLAKNPNADINKISSPLAKAVKSLYRQGGIKAFYVGNGLNVIKVFPESSIKFGSFEVTKKIMTKLEGCRDTKDLSKFSTYIAGGLAGMAAQFSVYPIDTLKFRVQCAPLDTKLKGNNLLFQTAKDMFREGGLRLFYRGVTVGIVGIFPYAALDLGTFSALKKWYIAKQAKTLNLPQDQVTLSNLVVLPMGAFSGTVGASVVYPINLLRTRLQAQGTYAHPYVYNGFKDVLLKTLEREGYQGLFKGLVPTLAKVCPAVSISYLCYENLKKFMNLE.

An EF-hand 1 domain is found at 11-46 (QRDIRYACLFKELDVKGNGQVTLDNLISAFEKNDHP). Ca(2+)-binding residues include K65, D70, D93, D95, D97, K99, and E104. EF-hand domains are found at residues 80-115 (NAES…LDNQ), 120-155 (NELN…RGQA), and 156-191 (SHKK…VPRK). T161 and S166 together coordinate Ca(2+). 3 Solcar repeats span residues 225–332 (IRGF…TKKI), 345–434 (LSKF…LKKW), and 452–541 (LSNL…LKKF). 6 helical membrane-spanning segments follow: residues 231–248 (FIAG…TAPF), 307–326 (GNGL…FGSF), 355–368 (GLAG…VYPI), 409–428 (GVTV…LGTF), 458–475 (LPMG…VYPI), and 516–535 (GLVP…YLCY).

The protein belongs to the mitochondrial carrier (TC 2.A.29) family.

Its subcellular location is the mitochondrion inner membrane. Calcium-dependent mitochondrial solute carrier. This chain is Calcium-binding mitochondrial carrier SAL1 (SAL1), found in Saccharomyces cerevisiae (Baker's yeast).